A 259-amino-acid polypeptide reads, in one-letter code: Ribonuclease HII (259 aa).

In terms of domain architecture, RNase H type-2 spans 70–258 (TLIAGIDEVG…VKSLVLGKKE (189 aa)). D76, E77, and D168 together coordinate a divalent metal cation.

This sequence belongs to the RNase HII family. Requires Mn(2+) as cofactor. The cofactor is Mg(2+).

The protein localises to the cytoplasm. It carries out the reaction Endonucleolytic cleavage to 5'-phosphomonoester.. In terms of biological role, endonuclease that specifically degrades the RNA of RNA-DNA hybrids. The protein is Ribonuclease HII of Streptococcus pneumoniae (strain 70585).